Here is a 642-residue protein sequence, read N- to C-terminus: DNA primase (642 aa).

The CHC2-type zinc-finger motif lies at 41 to 65 (CPFHNEKSPSFHVRPNHGHFHCFGC). The 87-residue stretch at 262–348 (HQAVVVEGYT…AGKSFVAVAA (87 aa)) folds into the Toprim domain. Glu268, Asp319, and Asp321 together coordinate Mg(2+). Residues 445–480 (NRRSVPERTRRRSVSVEQSPFMQPPGAPADQLAARP) form a disordered region.

The protein belongs to the DnaG primase family. Monomer. Interacts with DnaB. The cofactor is Zn(2+). Requires Mg(2+) as cofactor.

The enzyme catalyses ssDNA + n NTP = ssDNA/pppN(pN)n-1 hybrid + (n-1) diphosphate.. RNA polymerase that catalyzes the synthesis of short RNA molecules used as primers for DNA polymerase during DNA replication. This chain is DNA primase, found in Mycobacterium leprae (strain TN).